A 196-amino-acid polypeptide reads, in one-letter code: Chromophore lyase CpcT/CpeT (196 aa).

This sequence belongs to the CpcT/CpeT biliprotein lyase family.

Functionally, covalently attaches a chromophore to Cys residue(s) of phycobiliproteins. This is Chromophore lyase CpcT/CpeT from Thermosynechococcus vestitus (strain NIES-2133 / IAM M-273 / BP-1).